A 537-amino-acid polypeptide reads, in one-letter code: Actin-histidine N-methyltransferase (537 aa).

Positions 1-12 (MGKNTKRNKKTK) are enriched in basic residues. A disordered region spans residues 1–50 (MGKNTKRNKKTKQQQQQPQQNGVTASASGTAVEDFEDQQAASSLPSLNGK). S-adenosyl-L-methionine contacts are provided by residues R114, 143-145 (YQL), R299, 325-329 (DMANH), and 375-377 (NGF). Residues 133-364 (EGLEIAIFPG…TGEQFFIYYG (232 aa)) enclose the SET domain.

The protein belongs to the class V-like SAM-binding methyltransferase superfamily. SETD3 actin-histidine methyltransferase family.

It localises to the cytoplasm. It is found in the nucleus. It catalyses the reaction L-histidyl-[protein] + S-adenosyl-L-methionine = N(tele)-methyl-L-histidyl-[protein] + S-adenosyl-L-homocysteine + H(+). In terms of biological role, protein-histidine N-methyltransferase that specifically mediates 3-methylhistidine (tele-methylhistidine) methylation of actin at 'His-74'. The protein is Actin-histidine N-methyltransferase of Drosophila melanogaster (Fruit fly).